Here is a 333-residue protein sequence, read N- to C-terminus: Atrochrysone carboxyl ACP thioesterase (333 aa).

The Zn(2+) site is built by histidine 104, histidine 106, aspartate 108, and histidine 109. Aspartate 108 acts as the Proton donor/acceptor in catalysis.

This sequence belongs to the metallo-beta-lactamase superfamily. Zn(2+) serves as cofactor.

It carries out the reaction atrochrysone carboxyl-[ACP] + H2O = atrochrysone carboxylate + holo-[ACP] + H(+). The protein operates within pigment biosynthesis. Functionally, atrochrysone carboxyl ACP thioesterase; part of the gene cluster that mediates the biosynthesis of the bianthraquinone cladofulvin, a conidial pigment not required for virulence but that plays a role in fitness and resistance to environmental stresses including UV light and low-temperature stress. The pathway begins with the synthesis of atrochrysone thioester by the polyketide synthase (PKS) claG. The atrochrysone carboxyl ACP thioesterase claF then breaks the thioester bond and releases the atrochrysone carboxylic acid from claG. This compound is decarboxylated by claH to yield emodin, which is further converted to chrysophanol hydroquinone by the reductase claC and the dehydratase claB. The cytochrome P450 monooxygenase claM then catalyzes the dimerization of nataloe-emodin to cladofulvin. In Passalora fulva (Tomato leaf mold), this protein is Atrochrysone carboxyl ACP thioesterase.